A 247-amino-acid polypeptide reads, in one-letter code: tRNA pseudouridine synthase A (247 aa).

The active-site Nucleophile is the aspartate 53. Tyrosine 111 provides a ligand contact to substrate.

It belongs to the tRNA pseudouridine synthase TruA family. Homodimer.

The enzyme catalyses uridine(38/39/40) in tRNA = pseudouridine(38/39/40) in tRNA. Formation of pseudouridine at positions 38, 39 and 40 in the anticodon stem and loop of transfer RNAs. The chain is tRNA pseudouridine synthase A from Bacillus velezensis (strain DSM 23117 / BGSC 10A6 / LMG 26770 / FZB42) (Bacillus amyloliquefaciens subsp. plantarum).